The chain runs to 119 residues: MPRVKRGVTARARHKKVIAAAKGYRGRRGNVFRIAKQAVMRAGQYAYRDRRNKKRTFRALWITRINAAVREQGLSYSVFIAGLKKAAIELDRKVLADLAVRDKAGFAAIVQQAKAALAA.

The protein belongs to the bacterial ribosomal protein bL20 family.

Functionally, binds directly to 23S ribosomal RNA and is necessary for the in vitro assembly process of the 50S ribosomal subunit. It is not involved in the protein synthesizing functions of that subunit. This chain is Large ribosomal subunit protein bL20, found in Bordetella avium (strain 197N).